The chain runs to 146 residues: Large ribosomal subunit protein uL23m (146 aa).

Residues 108–146 (PDLFPEKEPTSPDPLEEELPQQRQSSDPRCPGIPSWFGL) are disordered.

Belongs to the universal ribosomal protein uL23 family. Component of the mitochondrial ribosome large subunit (39S) which comprises a 16S rRNA and about 50 distinct proteins.

It is found in the mitochondrion. This Rattus norvegicus (Rat) protein is Large ribosomal subunit protein uL23m (Mrpl23).